The primary structure comprises 220 residues: Deoxyribose-phosphate aldolase (220 aa).

The active-site Proton donor/acceptor is the Asp89. The active-site Schiff-base intermediate with acetaldehyde is the Lys151. The active-site Proton donor/acceptor is Lys180.

The protein belongs to the DeoC/FbaB aldolase family. DeoC type 1 subfamily.

It is found in the cytoplasm. The catalysed reaction is 2-deoxy-D-ribose 5-phosphate = D-glyceraldehyde 3-phosphate + acetaldehyde. The protein operates within carbohydrate degradation; 2-deoxy-D-ribose 1-phosphate degradation; D-glyceraldehyde 3-phosphate and acetaldehyde from 2-deoxy-alpha-D-ribose 1-phosphate: step 2/2. Functionally, catalyzes a reversible aldol reaction between acetaldehyde and D-glyceraldehyde 3-phosphate to generate 2-deoxy-D-ribose 5-phosphate. In Streptococcus pneumoniae (strain CGSP14), this protein is Deoxyribose-phosphate aldolase.